Reading from the N-terminus, the 150-residue chain is Putative STAG3-like protein 4 (150 aa).

It belongs to the SCC3 family.

This is Putative STAG3-like protein 4 (STAG3L4) from Homo sapiens (Human).